Here is a 189-residue protein sequence, read N- to C-terminus: MIDHAHLRLFQFCDSQFPTGAFSHSFGLETYIQRDIVHDEQSFQQWLILFLNEQLTYADGLTMRLVYNALEQDDAQAILRLDRILFVQNLPKETRQGSKQMGNRMVKLASELYDSDWLDWYHAQMLDKKAILHPAICFTMLGHHLEVDIETIIDYYLYQNVSSLTQNAVRAIPLGQTAGQRIVHQMIPS.

This sequence belongs to the UreF family. UreD, UreF and UreG form a complex that acts as a GTP-hydrolysis-dependent molecular chaperone, activating the urease apoprotein by helping to assemble the nickel containing metallocenter of UreC. The UreE protein probably delivers the nickel.

Its subcellular location is the cytoplasm. In terms of biological role, required for maturation of urease via the functional incorporation of the urease nickel metallocenter. This Staphylococcus xylosus protein is Urease accessory protein UreF.